Reading from the N-terminus, the 308-residue chain is Ribosomal RNA small subunit methyltransferase H (308 aa).

S-adenosyl-L-methionine is bound by residues 33–35, D52, Y81, D99, and Q106; that span reads GGH.

The protein belongs to the methyltransferase superfamily. RsmH family.

The protein resides in the cytoplasm. It catalyses the reaction cytidine(1402) in 16S rRNA + S-adenosyl-L-methionine = N(4)-methylcytidine(1402) in 16S rRNA + S-adenosyl-L-homocysteine + H(+). Functionally, specifically methylates the N4 position of cytidine in position 1402 (C1402) of 16S rRNA. The protein is Ribosomal RNA small subunit methyltransferase H of Francisella philomiragia subsp. philomiragia (strain ATCC 25017 / CCUG 19701 / FSC 153 / O#319-036).